Here is a 137-residue protein sequence, read N- to C-terminus: Peptide methionine sulfoxide reductase MsrB (137 aa).

The MsrB domain maps to Pro7 to Glu129. Residues Cys46, Cys49, Cys95, and Cys98 each coordinate Zn(2+). The active-site Nucleophile is Cys118.

This sequence belongs to the MsrB Met sulfoxide reductase family. Zn(2+) serves as cofactor.

The enzyme catalyses L-methionyl-[protein] + [thioredoxin]-disulfide + H2O = L-methionyl-(R)-S-oxide-[protein] + [thioredoxin]-dithiol. This is Peptide methionine sulfoxide reductase MsrB from Klebsiella pneumoniae (strain 342).